The sequence spans 76 residues: MSLTRCPECRKKISENAENCPNCGFSFKQKDLEMYKQRLEARRLHNEEVNRKSTKLHIIWFCIFAIFIAVTSWMVN.

The helical transmembrane segment at 53 to 70 threads the bilayer; it reads STKLHIIWFCIFAIFIAV.

It localises to the membrane. This is an uncharacterized protein from Haemophilus influenzae (strain ATCC 51907 / DSM 11121 / KW20 / Rd).